The following is a 631-amino-acid chain: 1-deoxy-D-xylulose-5-phosphate synthase (631 aa).

Residues His87 and 128–130 each bind thiamine diphosphate; that span reads GHS. Residue Asp159 participates in Mg(2+) binding. Thiamine diphosphate-binding positions include 160 to 161, Asn188, Phe295, and Glu378; that span reads GA. Asn188 lines the Mg(2+) pocket.

It belongs to the transketolase family. DXPS subfamily. In terms of assembly, homodimer. Mg(2+) serves as cofactor. The cofactor is thiamine diphosphate.

It carries out the reaction D-glyceraldehyde 3-phosphate + pyruvate + H(+) = 1-deoxy-D-xylulose 5-phosphate + CO2. The protein operates within metabolic intermediate biosynthesis; 1-deoxy-D-xylulose 5-phosphate biosynthesis; 1-deoxy-D-xylulose 5-phosphate from D-glyceraldehyde 3-phosphate and pyruvate: step 1/1. In terms of biological role, catalyzes the acyloin condensation reaction between C atoms 2 and 3 of pyruvate and glyceraldehyde 3-phosphate to yield 1-deoxy-D-xylulose-5-phosphate (DXP). This chain is 1-deoxy-D-xylulose-5-phosphate synthase, found in Pseudomonas syringae pv. tomato (strain ATCC BAA-871 / DC3000).